A 207-amino-acid chain; its full sequence is ATP phosphoribosyltransferase (207 aa).

It belongs to the ATP phosphoribosyltransferase family. Short subfamily. Heteromultimer composed of HisG and HisZ subunits.

The protein resides in the cytoplasm. The catalysed reaction is 1-(5-phospho-beta-D-ribosyl)-ATP + diphosphate = 5-phospho-alpha-D-ribose 1-diphosphate + ATP. It participates in amino-acid biosynthesis; L-histidine biosynthesis; L-histidine from 5-phospho-alpha-D-ribose 1-diphosphate: step 1/9. Catalyzes the condensation of ATP and 5-phosphoribose 1-diphosphate to form N'-(5'-phosphoribosyl)-ATP (PR-ATP). Has a crucial role in the pathway because the rate of histidine biosynthesis seems to be controlled primarily by regulation of HisG enzymatic activity. This Dictyoglomus turgidum (strain DSM 6724 / Z-1310) protein is ATP phosphoribosyltransferase (hisG).